The following is a 140-amino-acid chain: Large ribosomal subunit protein uL16 (140 aa).

It belongs to the universal ribosomal protein uL16 family. Part of the 50S ribosomal subunit.

Binds 23S rRNA and is also seen to make contacts with the A and possibly P site tRNAs. In Amoebophilus asiaticus (strain 5a2), this protein is Large ribosomal subunit protein uL16.